The following is a 215-amino-acid chain: 3-demethoxyubiquinol 3-hydroxylase (215 aa).

Residues E64, E94, H97, E146, E178, and H181 each contribute to the Fe cation site.

Belongs to the COQ7 family. Fe cation serves as cofactor.

The protein localises to the cell membrane. It carries out the reaction a 5-methoxy-2-methyl-3-(all-trans-polyprenyl)benzene-1,4-diol + AH2 + O2 = a 3-demethylubiquinol + A + H2O. Its pathway is cofactor biosynthesis; ubiquinone biosynthesis. Catalyzes the hydroxylation of 2-nonaprenyl-3-methyl-6-methoxy-1,4-benzoquinol during ubiquinone biosynthesis. This is 3-demethoxyubiquinol 3-hydroxylase from Coxiella burnetii (strain Dugway 5J108-111).